The primary structure comprises 239 residues: Phosphothreonine lyase OspF (239 aa).

The active-site Proton donor is H104. The Proton acceptor role is filled by K134.

It belongs to the phosphothreonine lyase family.

It is found in the secreted. Inhibited by the tyrosine phosphatase inhibitor vanadate. Functionally, catalyzes the removal of the phosphate group from the phosphothreonine in the mitogen-activated protein kinases such as MAPK2/ERK2, MAPK3/ERK1, MAPK8 and MAPK14 in an irreversible reaction, thus preventing the downstream phosphorylation of histone H3. This epigenetic modification results in inhibition of the transcription of a specific subset of pro-inflammatory genes, and ultimately to a reduced immune response against the invading pathogen. The diminished immune response enhances the bacterium's ability to disseminate and multiply within the host. This chain is Phosphothreonine lyase OspF (ospF), found in Shigella flexneri.